Reading from the N-terminus, the 514-residue chain is 3-octaprenyl-4-hydroxybenzoate carboxy-lyase (514 aa).

Asn-177 is a Mn(2+) binding site. Prenylated FMN-binding positions include 180–182 (IYR), 194–196 (RWL), and 199–200 (RG). Glu-243 provides a ligand contact to Mn(2+). Asp-314 (proton donor) is an active-site residue.

Belongs to the UbiD family. Homohexamer. It depends on prenylated FMN as a cofactor. Requires Mn(2+) as cofactor.

It localises to the cell membrane. The catalysed reaction is a 4-hydroxy-3-(all-trans-polyprenyl)benzoate + H(+) = a 2-(all-trans-polyprenyl)phenol + CO2. It functions in the pathway cofactor biosynthesis; ubiquinone biosynthesis. Its function is as follows. Catalyzes the decarboxylation of 3-octaprenyl-4-hydroxy benzoate to 2-octaprenylphenol, an intermediate step in ubiquinone biosynthesis. The polypeptide is 3-octaprenyl-4-hydroxybenzoate carboxy-lyase (Bordetella pertussis (strain Tohama I / ATCC BAA-589 / NCTC 13251)).